The following is a 391-amino-acid chain: Succinate--CoA ligase [ADP-forming] subunit beta (391 aa).

The region spanning 9 to 245 (KQIFAKYGVP…ISEEDADERE (237 aa)) is the ATP-grasp domain. ATP contacts are provided by residues Lys46, 53 to 55 (GRG), Glu99, Ala102, and Glu107. 2 residues coordinate Mg(2+): Asn200 and Asp214. Residues Asn265 and 322–324 (GIV) each bind substrate.

The protein belongs to the succinate/malate CoA ligase beta subunit family. In terms of assembly, heterotetramer of two alpha and two beta subunits. It depends on Mg(2+) as a cofactor.

The catalysed reaction is succinate + ATP + CoA = succinyl-CoA + ADP + phosphate. The enzyme catalyses GTP + succinate + CoA = succinyl-CoA + GDP + phosphate. Its pathway is carbohydrate metabolism; tricarboxylic acid cycle; succinate from succinyl-CoA (ligase route): step 1/1. In terms of biological role, succinyl-CoA synthetase functions in the citric acid cycle (TCA), coupling the hydrolysis of succinyl-CoA to the synthesis of either ATP or GTP and thus represents the only step of substrate-level phosphorylation in the TCA. The beta subunit provides nucleotide specificity of the enzyme and binds the substrate succinate, while the binding sites for coenzyme A and phosphate are found in the alpha subunit. The chain is Succinate--CoA ligase [ADP-forming] subunit beta from Sulfurimonas denitrificans (strain ATCC 33889 / DSM 1251) (Thiomicrospira denitrificans (strain ATCC 33889 / DSM 1251)).